The following is a 613-amino-acid chain: Methionine--tRNA ligase (613 aa).

The 'HIGH' region signature appears at 15–25 (PYANGPRHIGH). 4 residues coordinate Zn(2+): Cys-147, Cys-150, Cys-160, and Cys-163. A 'KMSKS' region motif is present at residues 351–355 (KFSSS). Ser-354 lines the ATP pocket.

The protein belongs to the class-I aminoacyl-tRNA synthetase family. MetG type 1 subfamily. In terms of assembly, monomer. It depends on Zn(2+) as a cofactor.

It localises to the cytoplasm. It catalyses the reaction tRNA(Met) + L-methionine + ATP = L-methionyl-tRNA(Met) + AMP + diphosphate. Its function is as follows. Is required not only for elongation of protein synthesis but also for the initiation of all mRNA translation through initiator tRNA(fMet) aminoacylation. The protein is Methionine--tRNA ligase of Corynebacterium efficiens (strain DSM 44549 / YS-314 / AJ 12310 / JCM 11189 / NBRC 100395).